We begin with the raw amino-acid sequence, 618 residues long: UvrABC system protein C (618 aa).

Positions 20–98 (TAPGVYRMYA…IKSLSPRYNV (79 aa)) constitute a GIY-YIG domain. One can recognise a UVR domain in the interval 207–242 (DQLGEEIMHSMQQASEALEFERAARLRDLLSSLRSM).

It belongs to the UvrC family. As to quaternary structure, interacts with UvrB in an incision complex.

The protein resides in the cytoplasm. Its function is as follows. The UvrABC repair system catalyzes the recognition and processing of DNA lesions. UvrC both incises the 5' and 3' sides of the lesion. The N-terminal half is responsible for the 3' incision and the C-terminal half is responsible for the 5' incision. In Xanthomonas campestris pv. campestris (strain B100), this protein is UvrABC system protein C.